A 472-amino-acid chain; its full sequence is Forkhead box protein H1 (472 aa).

Residues 36–56 (SSKRSCHRSSNPLLELGGRLD) are disordered. The segment at residues 97 to 193 (KPPYSYLAMI…LKRQNTAVSR (97 aa)) is a DNA-binding region (fork-head). Disordered stretches follow at residues 211–246 (YSQP…RPKL) and 261–360 (PASS…LPTS). Over residues 219-239 (PLPPESSLPPVPTRQSPPPSE) the composition is skewed to pro residues. The segment covering 294–310 (ASYNGSSSASSVSPASD) has biased composition (low complexity). The segment at 339-465 (SCPPPNKSSK…PNQYALQNGP (127 aa)) is SMAD-interaction domain (SID). Positions 357-361 (LPTSY) match the Fast/FoxH1 motif 1 (FM1) motif. Positions 367 to 373 (PNAVAPP) match the Fast/FoxH1 motif 2 (FM2) motif. The short motif at 428 to 448 (LDSMLQSVPPNKSVFDALGSN) is the SMAD interaction motif (SIM) element.

It is found in the nucleus. Functionally, transcriptional activator. Activates an activin response element (ARE). Recognizes and binds to the DNA sequence 5'-TGT[GT][GT]ATT-3'. Modulator of nodal signaling required for organizer formation. Also required for the development of dorsal axial structures and left-right symmetry. This chain is Forkhead box protein H1 (foxh1), found in Danio rerio (Zebrafish).